Consider the following 504-residue polypeptide: MVKIRPDEISSVIRQQIEQYTQEAQVVNVGTVLQVGDGIARIYGLQKVMSGELLEFQDGTIGVALNLETDNVGAVLMGDGLKIQEGDSVKATGKIAQVPVGEAFLGRVVDALARPIDGRGDIKADGTRLIESPAPGIIARRSVYEPLQTGLVSIDAMIPIGRGQRELIIGDRQTGKTAVATDTIINQKGGDVICVYVAIGQKASSVAQIVTTLTNAGAMDYTIIVSETADSPATLQYLAPYTGASLAEYFMYTGRATLIIYDDLSKQAQAYRQMSLLLKRPPGREAYPGDVFYLHSRLLERAAKLSDALGEGSMTALPIIETQGGDVSAYIPTNVISITDGQVFLSADLFNSGIRPAINVGISVSRVGSAAQIKAMKQVAGTLKLELAQFAELEAFSQFASDLDQATQNQLARGARLRELLKQAQNQPLSVDMQVATIYTGTQGHLDDLAVGQVRSFLTGLREYIKTNKASFCSDVTSSKKFGPEAEEMLKAAIAEYKAIFKAS.

Position 170–177 (170–177) interacts with ATP; that stretch reads GDRQTGKT.

This sequence belongs to the ATPase alpha/beta chains family. F-type ATPases have 2 components, CF(1) - the catalytic core - and CF(0) - the membrane proton channel. CF(1) has five subunits: alpha(3), beta(3), gamma(1), delta(1), epsilon(1). CF(0) has four main subunits: a, b, b' and c.

Its subcellular location is the plastid. The protein localises to the chloroplast thylakoid membrane. It catalyses the reaction ATP + H2O + 4 H(+)(in) = ADP + phosphate + 5 H(+)(out). Its function is as follows. Produces ATP from ADP in the presence of a proton gradient across the membrane. The alpha chain is a regulatory subunit. The polypeptide is ATP synthase subunit alpha, chloroplastic (Ostreococcus tauri).